Reading from the N-terminus, the 207-residue chain is Ribonuclease HII (207 aa).

Positions 5–207 (PLIIGVDEAG…APVRALLRPC (203 aa)) constitute an RNase H type-2 domain. The a divalent metal cation site is built by Asp-11, Glu-12, and Asp-117.

It belongs to the RNase HII family. Mn(2+) serves as cofactor. Mg(2+) is required as a cofactor.

It is found in the cytoplasm. The enzyme catalyses Endonucleolytic cleavage to 5'-phosphomonoester.. Its function is as follows. Endonuclease that specifically degrades the RNA of RNA-DNA hybrids. This chain is Ribonuclease HII, found in Hyphomonas neptunium (strain ATCC 15444).